The following is a 314-amino-acid chain: Homoserine kinase (314 aa).

95–105 (PHSRGLGSSAS) contacts ATP.

This sequence belongs to the GHMP kinase family. Homoserine kinase subfamily.

Its subcellular location is the cytoplasm. It carries out the reaction L-homoserine + ATP = O-phospho-L-homoserine + ADP + H(+). It participates in amino-acid biosynthesis; L-threonine biosynthesis; L-threonine from L-aspartate: step 4/5. In terms of biological role, catalyzes the ATP-dependent phosphorylation of L-homoserine to L-homoserine phosphate. The sequence is that of Homoserine kinase from Mycobacterium ulcerans (strain Agy99).